A 117-amino-acid polypeptide reads, in one-letter code: Hydrogenase maturation factor HypA (117 aa).

His2 provides a ligand contact to Ni(2+). Zn(2+) contacts are provided by Cys73, Cys76, Cys89, and Cys92.

It belongs to the HypA/HybF family.

In terms of biological role, involved in the maturation of [NiFe] hydrogenases. Required for nickel insertion into the metal center of the hydrogenase. The protein is Hydrogenase maturation factor HypA of Chlorobium luteolum (strain DSM 273 / BCRC 81028 / 2530) (Pelodictyon luteolum).